Consider the following 133-residue polypeptide: Small ribosomal subunit protein uS8 (133 aa).

Belongs to the universal ribosomal protein uS8 family. Part of the 30S ribosomal subunit. Contacts proteins S5 and S12.

In terms of biological role, one of the primary rRNA binding proteins, it binds directly to 16S rRNA central domain where it helps coordinate assembly of the platform of the 30S subunit. This is Small ribosomal subunit protein uS8 from Synechococcus sp. (strain WH7803).